The chain runs to 1102 residues: Ubiquitin carboxyl-terminal hydrolase 7 (1102 aa).

Residues 1 to 10 (MNHQQQQQQQ) show a composition bias toward low complexity. Positions 1–38 (MNHQQQQQQQKAGEQQLSEPEDMEMEAGDTDDPPRITQ) are disordered. The tract at residues 1-208 (MNHQQQQQQQ…APHGVAWDSK (208 aa)) is interaction with TSPYL5. Serine 18 is subject to Phosphoserine. Residues 19-31 (EPEDMEMEAGDTD) are compositionally biased toward acidic residues. Serine 49 carries the phosphoserine modification. The segment at 53 to 208 (NTAEEDMEDD…APHGVAWDSK (156 aa)) is interaction with p53/TP53, MDM2 and EBNA1. One can recognise an MATH domain in the interval 68-195 (EATFQFTVER…DDKVTFEVFV (128 aa)). A necessary for nuclear localization region spans residues 70–205 (TFQFTVERFS…QADAPHGVAW (136 aa)). In terms of domain architecture, USP spans 214-521 (VGLKNQGATC…NAYMLVYIRE (308 aa)). Residue cysteine 223 is the Nucleophile of the active site. Histidine 464 (proton acceptor) is an active-site residue. The tract at residues 622 to 801 (LWPMQARSNG…HRVDVIFCDK (180 aa)) is interaction with ICP0/VMW110. Lysine 869 is modified (N6-acetyllysine; alternate). A Glycyl lysine isopeptide (Lys-Gly) (interchain with G-Cter in SUMO2); alternate cross-link involves residue lysine 869. Lysine 869 is covalently cross-linked (Glycyl lysine isopeptide (Lys-Gly) (interchain with G-Cter in ubiquitin); alternate). Lysine 882 is covalently cross-linked (Glycyl lysine isopeptide (Lys-Gly) (interchain with G-Cter in SUMO2)). Phosphoserine is present on serine 963. N6-acetyllysine occurs at positions 1084 and 1096.

It belongs to the peptidase C19 family. Monomer. Homodimer. Part of a complex with DAXX, MDM2, RASSF1 and USP7. Part of a complex with DAXX, MDM2 and USP7. Interacts with MDM2; the interaction is independent of p53/TP53. Interacts with DAXX; the interaction is direct and independent of MDM2 and p53/TP53. Component of a complex composed of KMT2E/MLL5 (isoform 3), OGT (isoform 1) and USP7; the complex stabilizes KMT2E/MLL5, preventing KMT2E/MLL5 ubiquitination and proteasomal-mediated degradation. Interacts (via MATH domain) with KMT2E/MLL5 isoform 3. Interacts with OGT isoform 1. Interacts with FOXO4; the interaction is enhanced in presence of hydrogen peroxide and occurs independently of p53/TP53. Interacts with p53/TP53; the interaction is enhanced in response to DNA damage. Interacts with TSPYL5; this impairs interaction with p53/TP53. Interacts with PTEN; the interaction is direct. Interacts with ATXN1 and the strength of interaction is influenced by the length of the poly-Gln region in ATXN1. A weaker interaction seen with mutants having longer poly-Gln regions. Interacts with KIAA1530/UVSSA. Interacts with ABRAXAS2; the interaction is direct. Identified in a complex with TP53/p53 and ABRAXAS2. Interacts with MEX3C and antagonizes its ability to degrade mRNA. Interacts with DNMT1 and UHRF1. Interacts with FOXP3. Interacts (via MATH domain) with RNF220. Associated component of the Polycomb group (PcG) multiprotein PRC1-like complex. Interacts with EPOP. Interacts with OTUD4 and USP9X; the interaction is direct. Interacts with CRY2. Interacts with REST. Interacts with ERCC6. Part of a complex consisting of USP7, MAGEL2 and TRIM27; directly interacts with MAGEL2; directly interacts with TRIM27. In terms of assembly, (Microbial infection) Isoform 1 and isoform 2 interact with herpesvirus 1 trans-acting transcriptional protein ICP0/VMW110. Binding to ICP0/VMW110 may modulate the substrate specificity or activity of USP7 to stabilize viral proteins. As to quaternary structure, (Microbial infection) Interacts with Epstein-Barr virus EBNA1; the interaction is independent and simultaneous to EBNA1 interaction with USP7 as well as necessary for PML nuclear bodies disruption by EBNA1. EBNA1, USP7 and CSNK2B form a ternary complex. EBNA1 shows a 10-fold higher affinity than p53/TP53 and can compete with it for USP7 binding. (Microbial infection) Interacts with human cytomegalovirus proteins UL35 and UL35A; these interactions inhibit the ability of USP7 to form nuclear bodies. In terms of assembly, (Microbial infection) Interacts with herpes virus 8/HHV-8 proteins vIRF-1 and vIRF-3; these interactions may disrupt TP53 signaling pathway during viral infection by decreasing the availability of USP7 for deubiquitinating and stabilizing TP53. As to quaternary structure, (Microbial infection) Interacts with herpes virus 8/HHV-8 protein vIRF-2; this interaction modulates antiviral signaling via disruption of USP7 interactions with innate immune signaling proteins TRAF3 and TRAF6 thus affecting their ubiquitination. Post-translationally, isoform 1: Phosphorylated. Isoform 1 is phosphorylated at positions Ser-18 and Ser-963. Isoform 2: Not phosphorylated. In terms of processing, isoform 1: Polyneddylated. Isoform 2: Not Polyneddylated. Isoform 1 and isoform 2: Not sumoylated. Post-translationally, isoform 1 and isoform 2: Polyubiquitinated by herpesvirus 1 trans-acting transcriptional protein ICP0/VMW110; leading to its subsequent proteasomal degradation. Isoform 1: Ubiquitinated at Lys-869. Expressed in neural progenitor cells (at protein level). Widely expressed. Overexpressed in prostate cancer.

It is found in the nucleus. The protein localises to the cytoplasm. It localises to the PML body. The protein resides in the chromosome. It catalyses the reaction Thiol-dependent hydrolysis of ester, thioester, amide, peptide and isopeptide bonds formed by the C-terminal Gly of ubiquitin (a 76-residue protein attached to proteins as an intracellular targeting signal).. Inhibited by N-ethyl-maleimide (NEM) and divalent cations. Tolerates high concentrations of NaCl but is inhibited at concentrations of 195 mM and higher. In terms of biological role, hydrolase that deubiquitinates target proteins such as ARMC5, FOXO4, DEPTOR, KAT5, p53/TP53, MDM2, ERCC6, DNMT1, UHRF1, PTEN, KMT2E/MLL5 and DAXX. Together with DAXX, prevents MDM2 self-ubiquitination and enhances the E3 ligase activity of MDM2 towards p53/TP53, thereby promoting p53/TP53 ubiquitination and proteasomal degradation. Deubiquitinates p53/TP53, preventing degradation of p53/TP53, and enhances p53/TP53-dependent transcription regulation, cell growth repression and apoptosis. Deubiquitinates p53/TP53 and MDM2 and strongly stabilizes p53/TP53 even in the presence of excess MDM2, and also induces p53/TP53-dependent cell growth repression and apoptosis. Deubiquitination of FOXO4 in presence of hydrogen peroxide is not dependent on p53/TP53 and inhibits FOXO4-induced transcriptional activity. In association with DAXX, is involved in the deubiquitination and translocation of PTEN from the nucleus to the cytoplasm, both processes that are counteracted by PML. Deubiquitinates KMT2E/MLL5 preventing KMT2E/MLL5 proteasomal-mediated degradation. Involved in cell proliferation during early embryonic development. Involved in transcription-coupled nucleotide excision repair (TC-NER) in response to UV damage: recruited to DNA damage sites following interaction with KIAA1530/UVSSA and promotes deubiquitination of ERCC6, preventing UV-induced degradation of ERCC6. Involved in maintenance of DNA methylation via its interaction with UHRF1 and DNMT1: acts by mediating deubiquitination of UHRF1 and DNMT1, preventing their degradation and promoting DNA methylation by DNMT1. Deubiquitinates alkylation repair enzyme ALKBH3. OTUD4 recruits USP7 and USP9X to stabilize ALKBH3, thereby promoting the repair of alkylated DNA lesions. Acts as a chromatin regulator via its association with the Polycomb group (PcG) multiprotein PRC1-like complex; may act by deubiquitinating components of the PRC1-like complex. Able to mediate deubiquitination of histone H2B; it is however unsure whether this activity takes place in vivo. Exhibits a preference towards 'Lys-48'-linked ubiquitin chains. Increases regulatory T-cells (Treg) suppressive capacity by deubiquitinating and stabilizing the transcription factor FOXP3 which is crucial for Treg cell function. Plays a role in the maintenance of the circadian clock periodicity via deubiquitination and stabilization of the CRY1 and CRY2 proteins. Deubiquitinates REST, thereby stabilizing REST and promoting the maintenance of neural progenitor cells. Deubiquitinates SIRT7, inhibiting SIRT7 histone deacetylase activity and regulating gluconeogenesis. Involved in the regulation of WASH-dependent actin polymerization at the surface of endosomes and the regulation of endosomal protein recycling. It maintains optimal WASH complex activity and precise F-actin levels via deubiquitination of TRIM27 and WASHC1. Mediates the deubiquitination of phosphorylated DEPTOR, promoting its stability and leading to decreased mTORC1 signaling. (Microbial infection) Contributes to the overall stabilization and trans-activation capability of the herpesvirus 1 trans-acting transcriptional protein ICP0/VMW110 during HSV-1 infection. Its function is as follows. (Microbial infection) Upon infection with Epstein-Barr virus, the interaction with viral EBNA1 increases the association of USP7 with PML proteins, which is required for the polyubiquitylation and degradation of PML. The sequence is that of Ubiquitin carboxyl-terminal hydrolase 7 from Homo sapiens (Human).